A 112-amino-acid chain; its full sequence is Colipase (112 aa).

Residues 1–17 (MEKILILLLVALSVAYA) form the signal peptide. Residues 18–22 (APGPR) constitute a propeptide, enterostatin, activation peptide. Cystine bridges form between cysteine 34–cysteine 45, cysteine 40–cysteine 56, cysteine 44–cysteine 78, cysteine 66–cysteine 86, and cysteine 80–cysteine 104.

It belongs to the colipase family. In terms of assembly, forms a 1:1 stoichiometric complex with pancreatic lipase. Expressed by the pancreas.

It localises to the secreted. In terms of biological role, colipase is a cofactor of pancreatic lipase. It allows the lipase to anchor itself to the lipid-water interface. Without colipase the enzyme is washed off by bile salts, which have an inhibitory effect on the lipase. Functionally, enterostatin has a biological activity as a satiety signal. This chain is Colipase, found in Homo sapiens (Human).